The sequence spans 134 residues: Endoribonuclease YbeY (134 aa).

Residues histidine 94, histidine 98, and histidine 104 each contribute to the Zn(2+) site.

Belongs to the endoribonuclease YbeY family. The cofactor is Zn(2+).

Its subcellular location is the cytoplasm. In terms of biological role, single strand-specific metallo-endoribonuclease involved in late-stage 70S ribosome quality control and in maturation of the 3' terminus of the 16S rRNA. The polypeptide is Endoribonuclease YbeY (Campylobacter jejuni subsp. jejuni serotype O:23/36 (strain 81-176)).